We begin with the raw amino-acid sequence, 380 residues long: Alcohol dehydrogenase-like 4 (380 aa).

Zn(2+) contacts are provided by cysteine 47, threonine 49, histidine 70, cysteine 100, cysteine 103, cysteine 106, cysteine 114, and cysteine 180. Residues threonine 49 and histidine 70 each coordinate an alcohol. Threonine 49 contacts NAD(+). Residues 205-210 (GLGAVG), aspartate 229, lysine 234, 298-300 (LGV), phenylalanine 325, and arginine 375 contribute to the NAD(+) site.

It belongs to the zinc-containing alcohol dehydrogenase family. Class-III subfamily. Homodimer. Zn(2+) is required as a cofactor.

The protein resides in the cytoplasm. The enzyme catalyses a primary alcohol + NAD(+) = an aldehyde + NADH + H(+). It carries out the reaction a secondary alcohol + NAD(+) = a ketone + NADH + H(+). The chain is Alcohol dehydrogenase-like 4 from Arabidopsis thaliana (Mouse-ear cress).